Reading from the N-terminus, the 488-residue chain is Bifunctional protein NifU/MnmA (488 aa).

The nifU-like protein stretch occupies residues 1-130; sequence MPERYGPRVI…DYWSRQGDAL (130 aa). Residues 143-488 form a tRNA-specific 2-thiouridylase MnmA region; the sequence is RRGVVAAMSG…GGGIIARRDA (346 aa). ATP is bound by residues 149–156 and phenylalanine 175; that span reads AMSGGVDS. The active-site Nucleophile is cysteine 240. A disulfide bridge links cysteine 240 with cysteine 333. Glycine 264 contacts ATP. Residues 283–285 form an interaction with tRNA region; that stretch reads KDQ. The active-site Cysteine persulfide intermediate is the cysteine 333. The tract at residues 433 to 434 is interaction with tRNA; the sequence is RY.

The protein in the N-terminal section; belongs to the NifU family. In the C-terminal section; belongs to the MnmA/TRMU family.

It is found in the cytoplasm. It catalyses the reaction S-sulfanyl-L-cysteinyl-[protein] + uridine(34) in tRNA + AH2 + ATP = 2-thiouridine(34) in tRNA + L-cysteinyl-[protein] + A + AMP + diphosphate + H(+). Its function is as follows. May be involved in the formation or repair of [Fe-S] clusters present in iron-sulfur proteins. Functionally, catalyzes the 2-thiolation of uridine at the wobble position (U34) of tRNA, leading to the formation of s(2)U34. The protein is Bifunctional protein NifU/MnmA (nifU/mnmA) of Rubrobacter xylanophilus (strain DSM 9941 / JCM 11954 / NBRC 16129 / PRD-1).